Consider the following 195-residue polypeptide: Protein GrpE (195 aa).

The segment at 1 to 60 is disordered; that stretch reads MAKDEEKNSQASAAPNEGEVKAKQEQTSAKEPAAKAGETEKVADLQKQVEELTKQLDDQK. The segment covering 37–60 has biased composition (basic and acidic residues); that stretch reads GETEKVADLQKQVEELTKQLDDQK.

Belongs to the GrpE family. In terms of assembly, homodimer.

The protein localises to the cytoplasm. In terms of biological role, participates actively in the response to hyperosmotic and heat shock by preventing the aggregation of stress-denatured proteins, in association with DnaK and GrpE. It is the nucleotide exchange factor for DnaK and may function as a thermosensor. Unfolded proteins bind initially to DnaJ; upon interaction with the DnaJ-bound protein, DnaK hydrolyzes its bound ATP, resulting in the formation of a stable complex. GrpE releases ADP from DnaK; ATP binding to DnaK triggers the release of the substrate protein, thus completing the reaction cycle. Several rounds of ATP-dependent interactions between DnaJ, DnaK and GrpE are required for fully efficient folding. In Limosilactobacillus fermentum (strain NBRC 3956 / LMG 18251) (Lactobacillus fermentum), this protein is Protein GrpE.